The primary structure comprises 311 residues: Mediator of RNA polymerase II transcription subunit 27-A (311 aa).

It belongs to the Mediator complex subunit 27 family. Component of the Mediator complex.

The protein resides in the nucleus. In terms of biological role, component of the Mediator complex, a coactivator involved in the regulated transcription of nearly all RNA polymerase II-dependent genes. Mediator functions as a bridge to convey information from gene-specific regulatory proteins to the basal RNA polymerase II transcription machinery. Mediator is recruited to promoters by direct interactions with regulatory proteins and serves as a scaffold for the assembly of a functional preinitiation complex with RNA polymerase II and the general transcription factors. The sequence is that of Mediator of RNA polymerase II transcription subunit 27-A (med27-a) from Xenopus laevis (African clawed frog).